A 260-amino-acid chain; its full sequence is Movement protein (260 aa).

The disordered stretch occupies residues serine 230 to threonine 260.

Functionally, transports viral genome to neighboring plant cells directly through plasmosdesmata, without any budding. The movement protein allows efficient cell to cell propagation, by bypassing the host cell wall barrier. Might act by forming tubules structures that increase the size exclusion limit (SEL) of plasmodesmata, thereby allowing viral ribonucleoproteins to spread directly to neighboring cells. Binds to ssRNA. This chain is Movement protein, found in Groundnut rosette virus (strain MC1) (GRV).